The sequence spans 401 residues: Argininosuccinate synthase (401 aa).

Residue 8 to 16 coordinates ATP; the sequence is AYSGGLDTS. Residue tyrosine 87 participates in L-citrulline binding. Glycine 117 serves as a coordination point for ATP. 3 residues coordinate L-aspartate: threonine 119, asparagine 123, and aspartate 124. Residue asparagine 123 participates in L-citrulline binding. L-citrulline is bound by residues arginine 127, serine 175, glutamate 259, and tyrosine 271.

The protein belongs to the argininosuccinate synthase family. Type 1 subfamily. Homotetramer.

Its subcellular location is the cytoplasm. It catalyses the reaction L-citrulline + L-aspartate + ATP = 2-(N(omega)-L-arginino)succinate + AMP + diphosphate + H(+). Its pathway is amino-acid biosynthesis; L-arginine biosynthesis; L-arginine from L-ornithine and carbamoyl phosphate: step 2/3. In Paenarthrobacter aurescens (strain TC1), this protein is Argininosuccinate synthase.